A 161-amino-acid polypeptide reads, in one-letter code: Small ribosomal subunit protein uS15 (161 aa).

Residues 1–13 (MAGKRRKKGRSHS) show a composition bias toward basic residues. The disordered stretch occupies residues 1–22 (MAGKRRKKGRSHSTRPATPTVP).

This sequence belongs to the universal ribosomal protein uS15 family. As to quaternary structure, part of the 30S ribosomal subunit.

The protein is Small ribosomal subunit protein uS15 of Hyperthermus butylicus (strain DSM 5456 / JCM 9403 / PLM1-5).